The sequence spans 145 residues: Cell wall teichoic acid glycosylation protein GtcA (145 aa).

The next 4 membrane-spanning stretches (helical) occupy residues 21 to 41, 52 to 69, 96 to 116, and 121 to 141; these read ILMYLIMGGFTTLINIVTFWL, IANTIAWVASVLFAYFSN, FLTYIVDFLVMILLISGLGIN, and KIWTNVIVLILNYVFSKWIIF.

The protein belongs to the GtrA family.

It localises to the cell membrane. Functionally, involved in the decoration of cell wall teichoic acid with galactose and glucose. In Listeria innocua serovar 6a (strain ATCC BAA-680 / CLIP 11262), this protein is Cell wall teichoic acid glycosylation protein GtcA (gtcA).